The sequence spans 543 residues: Tyrosine-protein kinase Yes (543 aa).

Residues 1-20 (MGCIKSKENKSPAIKYRPEN) show a composition bias toward basic and acidic residues. A disordered region spans residues 1–45 (MGCIKSKENKSPAIKYRPENTPEPVSTSVSHYGAEPTTVSPCPSS). A lipid anchor (N-myristoyl glycine) is attached at Gly-2. A lipid anchor (S-palmitoyl cysteine; in membrane form) is attached at Cys-3. The residue at position 21 (Thr-21) is a Phosphothreonine. Tyr-32 carries the post-translational modification Phosphotyrosine. Ser-40 bears the Phosphoserine mark. Residues 91 to 152 (GGVTIFVALY…PSNYVAPADS (62 aa)) enclose the SH3 domain. One can recognise an SH2 domain in the interval 158-255 (WYFGKMGRKD…GLCHKLTTVC (98 aa)). One can recognise a Protein kinase domain in the interval 277 to 530 (LRLEVKLGQG…YIQSFLEDYF (254 aa)). ATP-binding positions include 283-291 (LGQGCFGEV) and Lys-305. A phosphotyrosine mark is found at Tyr-336 and Tyr-345. The active-site Proton acceptor is Asp-396. Tyr-426 bears the Phosphotyrosine; by autocatalysis mark. Tyr-446 carries the post-translational modification Phosphotyrosine. Tyr-537 is modified (phosphotyrosine; by CSK).

It belongs to the protein kinase superfamily. Tyr protein kinase family. SRC subfamily. Interacts with YAP1 and CSF1R. Interacts with CTNND1; this interaction allows YES1-mediated activation of FYN and FER and subsequent phosphorylation of CTNND1. Interacts with FASLG. Interacts with IL6ST/gp130. Interacts with SCRIB, when YES1 is in a closed conformation; the interaction facilitates YES1 autophosphorylation. Phosphorylated. Phosphorylation by CSK on the C-terminal tail maintains the enzyme in an inactive state. Autophosphorylation at Tyr-426 maintains enzyme activity by blocking CSK-mediated inhibition. Post-translationally, palmitoylation at Cys-3 promotes membrane localization. As to expression, expressed in the epithelial cells of renal proximal tubules and stomach as well as hematopoietic cells in the bone marrow and spleen in the fetal tissues. In adult, expressed in epithelial cells of the renal proximal tubules and present in keratinocytes in the basal epidermal layer of epidermis.

The protein resides in the cell membrane. Its subcellular location is the cytoplasm. It localises to the cytoskeleton. It is found in the microtubule organizing center. The protein localises to the centrosome. The protein resides in the cytosol. Its subcellular location is the cell junction. It catalyses the reaction L-tyrosyl-[protein] + ATP = O-phospho-L-tyrosyl-[protein] + ADP + H(+). Functionally, non-receptor protein tyrosine kinase that is involved in the regulation of cell growth and survival, apoptosis, cell-cell adhesion, cytoskeleton remodeling, and differentiation. Stimulation by receptor tyrosine kinases (RTKs) including EGFR, PDGFR, CSF1R and FGFR leads to recruitment of YES1 to the phosphorylated receptor, and activation and phosphorylation of downstream substrates. Upon EGFR activation, promotes the phosphorylation of PARD3 to favor epithelial tight junction assembly. Participates in the phosphorylation of specific junctional components such as CTNND1 by stimulating the FYN and FER tyrosine kinases at cell-cell contacts. Upon T-cell stimulation by CXCL12, phosphorylates collapsin response mediator protein 2/DPYSL2 and induces T-cell migration. Participates in CD95L/FASLG signaling pathway and mediates AKT-mediated cell migration. Plays a role in cell cycle progression by phosphorylating the cyclin-dependent kinase 4/CDK4 thus regulating the G1 phase. Also involved in G2/M progression and cytokinesis. Catalyzes phosphorylation of organic cation transporter OCT2 which induces its transport activity. The chain is Tyrosine-protein kinase Yes (YES1) from Homo sapiens (Human).